The chain runs to 305 residues: uncharacterized protein (305 aa).

A run of 10 helical transmembrane segments spans residues 11–31 (LLLAFLVIMWGVNWPLSKAAL), 37–57 (LLFAGIRTLIGGLLLVIVALP), 70–90 (IYLVSALLNITLFYGLQTIGL), 97–117 (LFSAIVFFQPVLMGVFSWLWL), 126–146 (VIGLILGFAGVAVISAAGFGG), 148–168 (ISVIGVLLALGSAVSWALGTV), 180–200 (IWMVALQLTIGSVFLLISGFW), 217–237 (LLFISVFVIALGWLVFFTLVG), 244–264 (VASYTFLIPLISIVASSIFLH), and 265–285 (EPLTLSLLAGLLLIVTSICLV). EamA domains lie at 18-141 (IMWG…VISA) and 161-287 (VSWA…LVNT).

The protein belongs to the EamA transporter family.

It localises to the cell membrane. This is an uncharacterized protein from Bacillus subtilis (strain 168).